The following is a 218-amino-acid chain: Methylthioribulose-1-phosphate dehydratase (218 aa).

Zn(2+) contacts are provided by H107 and H109.

The protein belongs to the aldolase class II family. MtnB subfamily. Zn(2+) is required as a cofactor.

It catalyses the reaction 5-(methylsulfanyl)-D-ribulose 1-phosphate = 5-methylsulfanyl-2,3-dioxopentyl phosphate + H2O. Its pathway is amino-acid biosynthesis; L-methionine biosynthesis via salvage pathway; L-methionine from S-methyl-5-thio-alpha-D-ribose 1-phosphate: step 2/6. In terms of biological role, catalyzes the dehydration of methylthioribulose-1-phosphate (MTRu-1-P) into 2,3-diketo-5-methylthiopentyl-1-phosphate (DK-MTP-1-P). In Xylella fastidiosa (strain 9a5c), this protein is Methylthioribulose-1-phosphate dehydratase.